The sequence spans 164 residues: Large ribosomal subunit protein uL10 (164 aa).

The protein belongs to the universal ribosomal protein uL10 family. As to quaternary structure, part of the ribosomal stalk of the 50S ribosomal subunit. The N-terminus interacts with L11 and the large rRNA to form the base of the stalk. The C-terminus forms an elongated spine to which L12 dimers bind in a sequential fashion forming a multimeric L10(L12)X complex.

Functionally, forms part of the ribosomal stalk, playing a central role in the interaction of the ribosome with GTP-bound translation factors. The sequence is that of Large ribosomal subunit protein uL10 from Aliivibrio fischeri (strain MJ11) (Vibrio fischeri).